The following is a 164-amino-acid chain: Probable metalloprotease y4qB (164 aa).

The MPN domain occupies 5-142 (IWIPESVVEA…WLPHAWIGQL (138 aa)). Zn(2+)-binding residues include His-89, His-91, and Asp-103.

It belongs to the peptidase M67B family.

The polypeptide is Probable metalloprotease y4qB (Sinorhizobium fredii (strain NBRC 101917 / NGR234)).